The chain runs to 210 residues: Probable glutathione peroxidase 8 (210 aa).

Residues A13–L35 traverse the membrane as a helical segment.

The protein belongs to the glutathione peroxidase family.

It localises to the membrane. It catalyses the reaction 2 glutathione + H2O2 = glutathione disulfide + 2 H2O. In Danio rerio (Zebrafish), this protein is Probable glutathione peroxidase 8 (gpx8).